The following is a 198-amino-acid chain: Small ribosomal subunit protein uS4c (198 aa).

One can recognise an S4 RNA-binding domain in the interval 85-145 (LRLDATIFRL…PKKFTIILIC (61 aa)).

The protein belongs to the universal ribosomal protein uS4 family. As to quaternary structure, part of the 30S ribosomal subunit.

It is found in the plastid. It localises to the apicoplast. Its function is as follows. One of the primary rRNA binding proteins, it binds directly to 16S rRNA where it nucleates assembly of the body of the 30S subunit. The chain is Small ribosomal subunit protein uS4c (rps4) from Toxoplasma gondii.